The following is a 118-amino-acid chain: Phosphoribosyl-AMP cyclohydrolase (118 aa).

Asp85 is a binding site for Mg(2+). Cys86 is a binding site for Zn(2+). Mg(2+) contacts are provided by Asp87 and Asp89. 2 residues coordinate Zn(2+): Cys102 and Cys109.

The protein belongs to the PRA-CH family. In terms of assembly, homodimer. The cofactor is Mg(2+). Requires Zn(2+) as cofactor.

The protein localises to the cytoplasm. The catalysed reaction is 1-(5-phospho-beta-D-ribosyl)-5'-AMP + H2O = 1-(5-phospho-beta-D-ribosyl)-5-[(5-phospho-beta-D-ribosylamino)methylideneamino]imidazole-4-carboxamide. It functions in the pathway amino-acid biosynthesis; L-histidine biosynthesis; L-histidine from 5-phospho-alpha-D-ribose 1-diphosphate: step 3/9. Functionally, catalyzes the hydrolysis of the adenine ring of phosphoribosyl-AMP. The protein is Phosphoribosyl-AMP cyclohydrolase of Sulfurisphaera tokodaii (strain DSM 16993 / JCM 10545 / NBRC 100140 / 7) (Sulfolobus tokodaii).